Reading from the N-terminus, the 220-residue chain is Deoxyribose-phosphate aldolase (220 aa).

Residue Asp89 is the Proton donor/acceptor of the active site. The active-site Schiff-base intermediate with acetaldehyde is Lys151. Catalysis depends on Lys180, which acts as the Proton donor/acceptor.

Belongs to the DeoC/FbaB aldolase family. DeoC type 1 subfamily.

It localises to the cytoplasm. It carries out the reaction 2-deoxy-D-ribose 5-phosphate = D-glyceraldehyde 3-phosphate + acetaldehyde. It participates in carbohydrate degradation; 2-deoxy-D-ribose 1-phosphate degradation; D-glyceraldehyde 3-phosphate and acetaldehyde from 2-deoxy-alpha-D-ribose 1-phosphate: step 2/2. Functionally, catalyzes a reversible aldol reaction between acetaldehyde and D-glyceraldehyde 3-phosphate to generate 2-deoxy-D-ribose 5-phosphate. In Streptococcus pneumoniae serotype 4 (strain ATCC BAA-334 / TIGR4), this protein is Deoxyribose-phosphate aldolase.